Reading from the N-terminus, the 1302-residue chain is DNA-directed RNA polymerase subunit beta (1302 aa).

It belongs to the RNA polymerase beta chain family. As to quaternary structure, the RNAP catalytic core consists of 2 alpha, 1 beta, 1 beta' and 1 omega subunit. When a sigma factor is associated with the core the holoenzyme is formed, which can initiate transcription.

The catalysed reaction is RNA(n) + a ribonucleoside 5'-triphosphate = RNA(n+1) + diphosphate. Functionally, DNA-dependent RNA polymerase catalyzes the transcription of DNA into RNA using the four ribonucleoside triphosphates as substrates. This is DNA-directed RNA polymerase subunit beta from Spiroplasma citri.